An 834-amino-acid polypeptide reads, in one-letter code: Leucine--tRNA ligase (834 aa).

A 'HIGH' region motif is present at residues Pro36–His46. The 'KMSKS' region motif lies at Lys602–Ser606. An ATP-binding site is contributed by Lys605.

This sequence belongs to the class-I aminoacyl-tRNA synthetase family.

It localises to the cytoplasm. The enzyme catalyses tRNA(Leu) + L-leucine + ATP = L-leucyl-tRNA(Leu) + AMP + diphosphate. The polypeptide is Leucine--tRNA ligase (Rickettsia canadensis (strain McKiel)).